The primary structure comprises 331 residues: MALEYLEQEPWRFLISSATVIFLVLNIAAVLTLAERKVSAYIQLRYGPNRVGPRGLLQPAADVVKLFIKENVSPGRADRWVFLAAPIAMFLPAAAVWLVIPFGPGMVVADLNIGLVYFFAITSIGALGVIMAGYGSRSNFSLLGALRGAGQMISYEVPLILSLLGVAMLTGSLSMVDIVEYQAGGFWNWIIWPQLPMFLAFFVSGLAEVKRIPFDLPEGESEIVGGFMIEYSGMTWALIQASEFASMAVMSAVASTLFLGGWQPPLPFLDLGVFNWLWLGIKTTLLIFVFQWIRWTLPRLRMDQLMDLGWKILVPVTILWLFVTAGAMLVI.

8 consecutive transmembrane segments (helical) span residues 13 to 33 (FLIS…VLTL), 80 to 100 (WVFL…WLVI), 113 to 133 (IGLV…IMAG), 159 to 179 (LILS…VDIV), 183 to 203 (AGGF…AFFV), 249 to 269 (VMSA…LPFL), 273 to 293 (VFNW…FQWI), and 311 to 331 (KILV…MLVI).

The protein belongs to the complex I subunit 1 family. In terms of assembly, NDH-1 is composed of 14 different subunits. Subunits NuoA, H, J, K, L, M, N constitute the membrane sector of the complex.

The protein resides in the cell membrane. The enzyme catalyses a quinone + NADH + 5 H(+)(in) = a quinol + NAD(+) + 4 H(+)(out). Its function is as follows. NDH-1 shuttles electrons from NADH, via FMN and iron-sulfur (Fe-S) centers, to quinones in the respiratory chain. The immediate electron acceptor for the enzyme in this species is believed to be ubiquinone. Couples the redox reaction to proton translocation (for every two electrons transferred, four hydrogen ions are translocated across the cytoplasmic membrane), and thus conserves the redox energy in a proton gradient. This subunit may bind ubiquinone. In Rubrobacter xylanophilus (strain DSM 9941 / JCM 11954 / NBRC 16129 / PRD-1), this protein is NADH-quinone oxidoreductase subunit H.